The sequence spans 799 residues: Lon protease 4 (799 aa).

A Lon N-terminal domain is found at 15 to 204 (FPLLPLRTGV…RVAGLLAEAS (190 aa)). 356–363 (GPPGVGKT) serves as a coordination point for ATP. In terms of domain architecture, Lon proteolytic spans 595-776 (TSVAGVATGL…SQVIAAALEE (182 aa)). Residues S682 and K725 contribute to the active site.

Belongs to the peptidase S16 family. Homohexamer. Organized in a ring with a central cavity.

The protein resides in the cytoplasm. The enzyme catalyses Hydrolysis of proteins in presence of ATP.. Its function is as follows. ATP-dependent serine protease that mediates the selective degradation of mutant and abnormal proteins as well as certain short-lived regulatory proteins. Required for cellular homeostasis and for survival from DNA damage and developmental changes induced by stress. Degrades polypeptides processively to yield small peptide fragments that are 5 to 10 amino acids long. Binds to DNA in a double-stranded, site-specific manner. This is Lon protease 4 from Sorangium cellulosum (strain So ce56) (Polyangium cellulosum (strain So ce56)).